Here is a 270-residue protein sequence, read N- to C-terminus: Large ribosomal subunit protein bL21m (270 aa).

The transit peptide at Met1–Phe68 directs the protein to the mitochondrion. Residues Phe68–Val113 form a disordered region. A compositionally biased stretch (acidic residues) spans Thr75–Met101. Positions Glu102–Val113 are enriched in basic and acidic residues.

This sequence belongs to the bacterial ribosomal protein bL21 family. As to quaternary structure, component of the mitochondrial ribosome large subunit. Constitutively expressed in roots, stems, leaves, flowers, pistils and siliques.

It localises to the mitochondrion. Its function is as follows. This protein binds to 23S ribosomal RNA in the presence of protein L20. Required for karyogamy during female gametophyte development, when the two polar nuclei fuse to form the diploid central cell nucleus, and during double fertilization of the egg cell and the central cell. The chain is Large ribosomal subunit protein bL21m from Arabidopsis thaliana (Mouse-ear cress).